The primary structure comprises 557 residues: Intraflagellar transport protein 56 (557 aa).

Positions 1–30 are disordered; that stretch reads MLLSRMKPAVGGEASTSSNEKKRKNKSKKI. Residues 21-30 are compositionally biased toward basic residues; sequence KKRKNKSKKI. 4 TPR repeats span residues 60–93, 95–128, 154–187, and 471–504; these read EHADLWTGFCAFHVGDHKRAMEEYKALTLRPDCP, DVWVYLGCALFFLGLYKEAEEAALKGSKTQLQNR, TEDQLSLASIHYMRSHYQEAIDIYKRILLQNREF, and ANDCYKMGQFYYAAKAFDALERLDPNPEYWEGKR.

This sequence belongs to the IFT56 family. Component of the IFT complex B.

It localises to the cell projection. It is found in the cilium. Functionally, component of the intraflagellar transport (IFT) complex B required for transport of proteins in the motile cilium. Required for transport of specific ciliary cargo proteins related to motility, while it is neither required for IFT complex B assembly or motion nor for cilium assembly. Plays a key role in maintaining the integrity of the IFT complex B and the proper ciliary localization of the IFT complex B components. Essential for maintaining proper microtubule organization within the ciliary axoneme. This is Intraflagellar transport protein 56 from Danio rerio (Zebrafish).